The chain runs to 272 residues: Pyrroline-5-carboxylate reductase 3 (272 aa).

Belongs to the pyrroline-5-carboxylate reductase family.

Its subcellular location is the cytoplasm. The catalysed reaction is L-proline + NADP(+) = (S)-1-pyrroline-5-carboxylate + NADPH + 2 H(+). It catalyses the reaction L-proline + NAD(+) = (S)-1-pyrroline-5-carboxylate + NADH + 2 H(+). Its pathway is amino-acid biosynthesis; L-proline biosynthesis; L-proline from L-glutamate 5-semialdehyde: step 1/1. Its function is as follows. Catalyzes the reduction of 1-pyrroline-5-carboxylate (PCA) to L-proline. The polypeptide is Pyrroline-5-carboxylate reductase 3 (proG) (Bacillus subtilis (strain 168)).